Reading from the N-terminus, the 299-residue chain is ATP phosphoribosyltransferase (299 aa).

Belongs to the ATP phosphoribosyltransferase family. Long subfamily. Equilibrium between an active dimeric form, an inactive hexameric form and higher aggregates. Interconversion between the various forms is largely reversible and is influenced by the natural substrates and inhibitors of the enzyme. It depends on Mg(2+) as a cofactor.

Its subcellular location is the cytoplasm. It catalyses the reaction 1-(5-phospho-beta-D-ribosyl)-ATP + diphosphate = 5-phospho-alpha-D-ribose 1-diphosphate + ATP. It functions in the pathway amino-acid biosynthesis; L-histidine biosynthesis; L-histidine from 5-phospho-alpha-D-ribose 1-diphosphate: step 1/9. Feedback inhibited by histidine. Its function is as follows. Catalyzes the condensation of ATP and 5-phosphoribose 1-diphosphate to form N'-(5'-phosphoribosyl)-ATP (PR-ATP). Has a crucial role in the pathway because the rate of histidine biosynthesis seems to be controlled primarily by regulation of HisG enzymatic activity. The chain is ATP phosphoribosyltransferase from Shigella dysenteriae serotype 1 (strain Sd197).